Consider the following 908-residue polypeptide: Autophagy-related protein 9 (908 aa).

The Cytoplasmic segment spans residues 1 to 299; the sequence is MTDSQDKVNG…NGFYCIITEK (299 aa). A disordered region spans residues 37–188; that stretch reads MSHITMPTEQ…TKSTKNPSES (152 aa). Positions 103–124 are enriched in acidic residues; sequence SEPDEGGTEEDEVHLEEEDFSD. The span at 126 to 139 shows a compositional bias: polar residues; the sequence is DLASSVSKYGQPSS. The span at 146–156 shows a compositional bias: basic and acidic residues; it reads LSNRDSNRGSD. The span at 176-187 shows a compositional bias: polar residues; it reads TGATKSTKNPSE. A helical membrane pass occupies residues 300 to 320; that stretch reads VIHLATILFVVFISTYMGHCI. Topologically, residues 321–349 are lumenal; that stretch reads DYSRLSSSHTFEEIHIEQCYKTQISPTAK. The helical transmembrane segment at 350 to 370 threads the bilayer; sequence VFLWIFYAFIGLKVLQLYFDV. Residues 371-507 are Cytoplasmic-facing; sequence KALKDIRNFY…EYLGEELKKR (137 aa). The stretch at 508–528 is an intramembrane region; sequence FVLAGFLNIILSPFLVTYFVL. Residues 529–594 are Cytoplasmic-facing; the sequence is LNFFRYFNEY…QFPNTLLSLT (66 aa). A helical membrane pass occupies residues 595–615; it reads LSFIQFVSGSFVAILGILTIF. Residues 616–629 lie on the Lumenal side of the membrane; that stretch reads DPDNFLNFEITPDR. A helical transmembrane segment spans residues 630-650; the sequence is TVLFYMTVFGTLWAVCHSSIN. The Cytoplasmic portion of the chain corresponds to 651-696; sequence DEYTVLKPEETLEELVSYTHYAPKEWKGKYHTEDIKNEFCRLYNLR. The stretch at 697–717 is an intramembrane region; the sequence is ITLLLRELVSIIITPFILWFS. Residues 718 to 908 are Cytoplasmic-facing; it reads LPKNSERIID…QYYKKSDRNR (191 aa).

This sequence belongs to the ATG9 family. As to quaternary structure, homotrimer; forms a homotrimer with a central pore that forms a path between the two membrane leaflets. Phosphorylated by ATG1. ATG1 phosphorylation is required for preautophagosome elongation.

The protein resides in the preautophagosomal structure membrane. It is found in the cytoplasmic vesicle membrane. The protein localises to the golgi apparatus membrane. Its subcellular location is the endoplasmic reticulum membrane. The catalysed reaction is a 1,2-diacyl-sn-glycero-3-phosphocholine(in) = a 1,2-diacyl-sn-glycero-3-phosphocholine(out). It carries out the reaction a 1,2-diacyl-sn-glycero-3-phospho-L-serine(in) = a 1,2-diacyl-sn-glycero-3-phospho-L-serine(out). It catalyses the reaction a 1,2-diacyl-sn-glycero-3-phosphoethanolamine(in) = a 1,2-diacyl-sn-glycero-3-phosphoethanolamine(out). The enzyme catalyses a 1,2-diacyl-sn-glycero-3-phospho-(1D-myo-inositol-3-phosphate)(in) = a 1,2-diacyl-sn-glycero-3-phospho-(1D-myo-inositol-3-phosphate)(out). Functionally, phospholipid scramblase involved in autophagy and cytoplasm to vacuole transport (Cvt) vesicle formation. Cycles between the preautophagosomal structure/phagophore assembly site (PAS) and the cytoplasmic vesicle pool and supplies membrane for the growing autophagosome. Lipid scramblase activity plays a key role in preautophagosomal structure/phagophore assembly by distributing the phospholipids that arrive through ATG2 from the cytoplasmic to the luminal leaflet of the bilayer, thereby driving autophagosomal membrane expansion. Required for mitophagy. Also involved in endoplasmic reticulum-specific autophagic process and is essential for the survival of cells subjected to severe ER stress. Different machineries are required for anterograde trafficking to the PAS during either the Cvt pathway or bulk autophagy and for retrograde trafficking. In Kluyveromyces lactis (strain ATCC 8585 / CBS 2359 / DSM 70799 / NBRC 1267 / NRRL Y-1140 / WM37) (Yeast), this protein is Autophagy-related protein 9 (ATG9).